The chain runs to 324 residues: Glyoxylate/hydroxypyruvate reductase B (324 aa).

Active-site residues include Arg237 and Glu266. The active-site Proton donor is the His285.

It belongs to the D-isomer specific 2-hydroxyacid dehydrogenase family. GhrB subfamily. As to quaternary structure, homodimer.

It localises to the cytoplasm. The enzyme catalyses glycolate + NADP(+) = glyoxylate + NADPH + H(+). It carries out the reaction (R)-glycerate + NAD(+) = 3-hydroxypyruvate + NADH + H(+). The catalysed reaction is (R)-glycerate + NADP(+) = 3-hydroxypyruvate + NADPH + H(+). Functionally, catalyzes the NADPH-dependent reduction of glyoxylate and hydroxypyruvate into glycolate and glycerate, respectively. This Salmonella typhi protein is Glyoxylate/hydroxypyruvate reductase B.